The following is a 126-amino-acid chain: RxLR effector protein BLR31 (126 aa).

A signal peptide spans Met1 to Ala22. The short motif at Arg44–Arg58 is the RxLR-dEER element.

The protein belongs to the RxLR effector family.

Its subcellular location is the secreted. The protein localises to the host cell. Functionally, secreted effector that triggers a hypersensitive response (HR) in 3 Lactuca saligna accessions (CGN05947, CGN05310, CGN05304). This chain is RxLR effector protein BLR31, found in Bremia lactucae (Lettuce downy mildew).